The chain runs to 266 residues: Putative carbamate hydrolase RutD (266 aa).

The AB hydrolase-1 domain occupies 14-115; the sequence is PVVVLISGLG…TMLVSVNGWL (102 aa).

It belongs to the AB hydrolase superfamily. Hydrolase RutD family.

It carries out the reaction carbamate + 2 H(+) = NH4(+) + CO2. Involved in pyrimidine catabolism. May facilitate the hydrolysis of carbamate, a reaction that can also occur spontaneously. The protein is Putative carbamate hydrolase RutD of Shigella flexneri serotype X (strain 2002017).